A 289-amino-acid chain; its full sequence is ATP synthase gamma chain (289 aa).

Belongs to the ATPase gamma chain family. As to quaternary structure, F-type ATPases have 2 components, CF(1) - the catalytic core - and CF(0) - the membrane proton channel. CF(1) has five subunits: alpha(3), beta(3), gamma(1), delta(1), epsilon(1). CF(0) has three main subunits: a, b and c.

The protein resides in the cell inner membrane. In terms of biological role, produces ATP from ADP in the presence of a proton gradient across the membrane. The gamma chain is believed to be important in regulating ATPase activity and the flow of protons through the CF(0) complex. In Polynucleobacter necessarius subsp. necessarius (strain STIR1), this protein is ATP synthase gamma chain.